The chain runs to 448 residues: Signal recognition particle protein (448 aa).

GTP is bound by residues 101–108 (GLQGSGKT), 182–186 (DSAGR), and 240–243 (SKFD).

This sequence belongs to the GTP-binding SRP family. SRP54 subfamily. Part of the signal recognition particle protein translocation system, which is composed of SRP and FtsY. SRP is a ribonucleoprotein composed of Ffh and a 4.5S RNA molecule.

The protein resides in the cytoplasm. It catalyses the reaction GTP + H2O = GDP + phosphate + H(+). In terms of biological role, involved in targeting and insertion of nascent membrane proteins into the cytoplasmic membrane. Binds to the hydrophobic signal sequence of the ribosome-nascent chain (RNC) as it emerges from the ribosomes. The SRP-RNC complex is then targeted to the cytoplasmic membrane where it interacts with the SRP receptor FtsY. Interaction with FtsY leads to the transfer of the RNC complex to the Sec translocase for insertion into the membrane, the hydrolysis of GTP by both Ffh and FtsY, and the dissociation of the SRP-FtsY complex into the individual components. The chain is Signal recognition particle protein from Helicobacter pylori (strain ATCC 700392 / 26695) (Campylobacter pylori).